We begin with the raw amino-acid sequence, 175 residues long: NADH-ubiquinone oxidoreductase chain 6 (175 aa).

A run of 5 helical transmembrane segments spans residues 1–21, 25–45, 47–67, 88–108, and 149–169; these read MMIYIGFILSIVFVISFVGFS, SPIYGGLVLIVSGGVGCGIVM, FGGSFLGLMVFLIYLGGMLVV, TVLSTFILGVLMEAMLVLYMF, and YGVWIIIVTGWSLFVGVLVVL.

It belongs to the complex I subunit 6 family. As to quaternary structure, core subunit of respiratory chain NADH dehydrogenase (Complex I) which is composed of 45 different subunits.

It is found in the mitochondrion inner membrane. It catalyses the reaction a ubiquinone + NADH + 5 H(+)(in) = a ubiquinol + NAD(+) + 4 H(+)(out). In terms of biological role, core subunit of the mitochondrial membrane respiratory chain NADH dehydrogenase (Complex I) which catalyzes electron transfer from NADH through the respiratory chain, using ubiquinone as an electron acceptor. Essential for the catalytic activity and assembly of complex I. This is NADH-ubiquinone oxidoreductase chain 6 (MT-ND6) from Rhinoceros unicornis (Greater Indian rhinoceros).